The following is a 554-amino-acid chain: U4/U6 small nuclear ribonucleoprotein PRP4-like protein (554 aa).

Over residues Ala-48–Arg-65 the composition is skewed to pro residues. Positions Ala-48–Glu-99 are disordered. Residues Ile-88–Glu-99 are compositionally biased toward basic and acidic residues. WD repeat units follow at residues Gly-253–Ala-292, Asp-296–Phe-335, Gly-337–Leu-376, Gly-379–Val-418, Gly-421–Ile-460, Ala-463–Ser-503, and Gly-506–Glu-545.

The protein resides in the nucleus speckle. In terms of biological role, participates in pre-mRNA splicing. Part of the U4/U5/U6 tri-snRNP complex, one of the building blocks of the spliceosome. Essential for reproduction. In female gametophyte, is necessary for the egg cell and central cell fate determination and hence reproductive success. Involved in a mechanism that prevents accessory cells from adopting gametic cell fate. Modulates egg cell signaling center that regulates the development of all female gametophytic cells. The chain is U4/U6 small nuclear ribonucleoprotein PRP4-like protein from Arabidopsis thaliana (Mouse-ear cress).